We begin with the raw amino-acid sequence, 178 residues long: Adenine phosphoribosyltransferase (178 aa).

It belongs to the purine/pyrimidine phosphoribosyltransferase family. Homodimer.

It localises to the cytoplasm. The enzyme catalyses AMP + diphosphate = 5-phospho-alpha-D-ribose 1-diphosphate + adenine. The protein operates within purine metabolism; AMP biosynthesis via salvage pathway; AMP from adenine: step 1/1. Catalyzes a salvage reaction resulting in the formation of AMP, that is energically less costly than de novo synthesis. This Mycoplasmoides gallisepticum (strain R(low / passage 15 / clone 2)) (Mycoplasma gallisepticum) protein is Adenine phosphoribosyltransferase.